Reading from the N-terminus, the 171-residue chain is Small ribosomal subunit protein uS5 (171 aa).

The S5 DRBM domain maps to 15-78 (YEEKVVKIKR…EKAKKQLIRI (64 aa)).

This sequence belongs to the universal ribosomal protein uS5 family. Part of the 30S ribosomal subunit. Contacts proteins S4 and S8.

Functionally, with S4 and S12 plays an important role in translational accuracy. Located at the back of the 30S subunit body where it stabilizes the conformation of the head with respect to the body. The sequence is that of Small ribosomal subunit protein uS5 from Phytoplasma australiense.